The following is a 977-amino-acid chain: MKPKSVSEIREIFLNYFKDKSHNVVPSSSLLPAGDPTLLFTTAGMVQFKPLFTGAVELPYTRATSCQKCLRTTDLEVVGKTERHCTFFEMLGNFSFGNYFKEEAIEYALDCSVNHFGFDKNKIWVTVYTDDDEAEKIWLSKGIPKERITRLGKKDNFWGPAGDSGACGPCSELYLDRGIEKGGPNCATSGTCKPGCDCDRFLEFWNIVFNQFNQDTEGNLHPLKQTGIDTGSGLERVALLLQEVDSVYDTNELRKIISFYEELSGISYEDKTLSEISEKKNNNQQISSQVRNETKSIQDSRKTAFRVVTDHIRSVLFSIGDGIYPDRTGRGYVIRRLIRRATLFGRKLNFKEPFLYKLVDKVIEIYKARYPELQRNAAAITKTILVEEELFLKTLELGLEKIESLVQKTKAGGKTIFSGADAFLLYGTYGFPAEMTEEIVAEQGLDFDKKGFQEELEKDRQFSRESWKVNKVSLMTGLNVDKTEFLGYSSVSGKGNITHLFYNSPKSSNSLSQVDSKLQSSTPAGTGSYDSKQVSSLKEGQAGAIVLNKTPFYPEGGGQVGDIGFLRQGKNVFKVFDTQKENDSIIHFGEVLSGEFIVSQELEAEVEITRRERLKFHHSGTHLLNGALRTLLGDHVLQKGSIVSPEYLRFDFSHPSSLTSEEIRQIESWVNESIRKNFPVETKELSIEDAKKTGAVATFGEKYGERVRVVQMGDASIEFCGGTHVSRTGEIGYFFIKKESSPGAGNRRIEGVCGPAVIETFQNRFSELTESVQNLNLKIKSELGEEGTKILILSFIPGPDEIREKLEKEGASAVSFFRDLSENIATKIEENTSSFLKIKKNLAERDFENNTSVIENVLASSVDTGIGKIVSAIFEDKDPNSLKGLSDNLKVREKNLLVILGSRNSENASIVITCSSELTLKGIHCGNLIKTACELLGGKGGGRPDMAQGGGKEKQNLESAIAGVINEAKQILTGERV.

Residues 512-535 form a disordered region; the sequence is SQVDSKLQSSTPAGTGSYDSKQVS. Residues H618, H622, C720, and H724 each coordinate Zn(2+).

Belongs to the class-II aminoacyl-tRNA synthetase family. Zn(2+) is required as a cofactor.

The protein resides in the cytoplasm. The enzyme catalyses tRNA(Ala) + L-alanine + ATP = L-alanyl-tRNA(Ala) + AMP + diphosphate. Catalyzes the attachment of alanine to tRNA(Ala) in a two-step reaction: alanine is first activated by ATP to form Ala-AMP and then transferred to the acceptor end of tRNA(Ala). Also edits incorrectly charged Ser-tRNA(Ala) and Gly-tRNA(Ala) via its editing domain. The sequence is that of Alanine--tRNA ligase from Leptospira interrogans serogroup Icterohaemorrhagiae serovar copenhageni (strain Fiocruz L1-130).